Here is a 491-residue protein sequence, read N- to C-terminus: MRLISKRRIRFIVFILFGVLTVFVVSRLVVHFQYNQEIKFYKKYFQQRKDGLHEIYNPLEIKQIPKETIDDLYTARLDKELKNGEVIEWSKFAYVNYVTNADYLCNTLIIFNDLKQEFETKAKLVLLISKDLLDPNTSSNVAYISSLLNKIQAIDEDQVVIKLIDNIVKPKDTTPWNESLTKLLVFNQTEFDRVIYLDNDAILRSSLDELFFLPNYIKFAAPLTYWFLSNSDLEKSYHETRHREKQPINLQSYTKVLTKRIGKGQMIYNHLPSLPHSLYLNSNNIAQDIISSTSSLSPLFDFQSSKKVGKLKFASNLMVINPSKEAFDEIVNVMLPKILNKKEKYDMDLINEEMYNLKKIIYKQFIFFRKVRKLFKPEVLVLPFARYGLLTGSLRNPRHYSIIYNDVLGYKTLDNDGNDIPVGLNDSVAYSKYIHFSDYPLAKPWNYPSMKEFECIVKEEDAEDSKLEHQACDLWNSVYASYIQSREICLV.

Topologically, residues 1–10 (MRLISKRRIR) are cytoplasmic. The helical; Signal-anchor for type II membrane protein transmembrane segment at 11–31 (FIVFILFGVLTVFVVSRLVVH) threads the bilayer. Residues 32 to 491 (FQYNQEIKFY…YIQSREICLV (460 aa)) are Lumenal-facing. 3 N-linked (GlcNAc...) asparagine glycosylation sites follow: Asn136, Asn177, and Asn187. Residues 198 to 200 (DND) carry the DXD motif. Asn425 carries N-linked (GlcNAc...) asparagine glycosylation.

The protein belongs to the GNT1 family. N-glycosylated.

Its subcellular location is the golgi apparatus membrane. The protein localises to the vacuole membrane. N-acetylglucosaminyltransferase involved in the Golgi-specific modification of N-linked glycans. The protein is Glucose N-acetyltransferase 1 (GNT1) of Saccharomyces cerevisiae (strain ATCC 204508 / S288c) (Baker's yeast).